Here is a 96-residue protein sequence, read N- to C-terminus: Small ribosomal subunit protein bS6 (96 aa).

Belongs to the bacterial ribosomal protein bS6 family.

Its function is as follows. Binds together with bS18 to 16S ribosomal RNA. This is Small ribosomal subunit protein bS6 (rpsF) from Mycobacterium bovis (strain ATCC BAA-935 / AF2122/97).